The sequence spans 302 residues: Ribostamycin:4-(gamma-L-glutamylamino)-(S)-2-hydroxybutanoyl-[BtrI acyl-carrier protein] 4-(gamma-L-glutamylamino)-(S)-2-hydroxybutanoate transferase (302 aa).

It catalyses the reaction 4-(gamma-L-glutamylamino)-(2S)-2-hydroxybutanoyl-[BtrI ACP] + ribostamycin = gamma-L-glutamyl-butirosin B + holo-[BtrI ACP] + H(+). The protein operates within antibiotic biosynthesis; butirosin biosynthesis. In terms of biological role, aminoglycoside acyltransferase that attaches the (S)-4-amino-2-hydroxybutyrate (AHBA) side chain from the acyl carrier protein BtrI to the aminoglycoside ribostamycin in the biosynthetic pathway of butirosin. The AHBA side chain protects the antibiotic from several common resistance mechanisms. This chain is Ribostamycin:4-(gamma-L-glutamylamino)-(S)-2-hydroxybutanoyl-[BtrI acyl-carrier protein] 4-(gamma-L-glutamylamino)-(S)-2-hydroxybutanoate transferase (btrH), found in Niallia circulans (Bacillus circulans).